The chain runs to 252 residues: Probable oligoribonuclease (252 aa).

Positions 81 to 241 (VWIDCEMTGL…ALSDILESIG (161 aa)) constitute an Exonuclease domain. Residue Tyr-202 is part of the active site.

Belongs to the oligoribonuclease family.

It is found in the cytoplasm. The protein localises to the nucleus. In terms of biological role, 3'-to-5' exoribonuclease specific for small oligoribonucleotides. The chain is Probable oligoribonuclease (rex2) from Schizosaccharomyces pombe (strain 972 / ATCC 24843) (Fission yeast).